Here is a 181-residue protein sequence, read N- to C-terminus: uncharacterized protein (181 aa).

The interval 151–181 (AQKKKDFQEPENKHEQLTSTKAPCQENWSDF) is disordered. A compositionally biased stretch (basic and acidic residues) spans 154–166 (KKDFQEPENKHEQ). Residues 167-181 (LTSTKAPCQENWSDF) are compositionally biased toward polar residues.

This is an uncharacterized protein from Caenorhabditis elegans.